A 285-amino-acid chain; its full sequence is Coagulation factor IX (285 aa).

Tyr23 carries the post-translational modification Sulfotyrosine. An N-linked (GlcNAc...) asparagine glycan is attached at Asn25. Thr27 is modified (phosphothreonine; alternate). O-linked (GalNAc...) threonine; alternate glycosylation is present at Thr27. N-linked (GlcNAc...) asparagine glycosylation occurs at Asn45. Thr47 is a glycosylation site (O-linked (GalNAc...) threonine). The region spanning 59–285 is the Peptidase S1 domain; the sequence is VVGGEDAKPG…YTKVSRYVNW (227 aa). Cys84 and Cys100 are joined by a disulfide. The active-site Charge relay system is His99. Asn115, Glu120, and Glu123 together coordinate Ca(2+). Residues Asn127 and Asn138 are each glycosylated (N-linked (GlcNAc...) asparagine). Residue Asp147 is the Charge relay system of the active site. 2 disulfide bridges follow: Cys214-Cys228 and Cys239-Cys267. Ser243 (charge relay system) is an active-site residue.

Belongs to the peptidase S1 family. As to quaternary structure, heterodimer of a light chain and a heavy chain; disulfide-linked. Interacts (inactive and activated) with F11 (activated) in calcium-dependent manner. Interacts with SERPINC1. Post-translationally, activated by factor XIa, which excises the activation peptide. The propeptide can also be removed by snake venom protease. Activated by coagulation factor VIIa-tissue factor (F7-F3) complex in calcium-dependent manner.

Its subcellular location is the secreted. The enzyme catalyses Selective cleavage of Arg-|-Ile bond in factor X to form factor Xa.. Functionally, factor IX is a vitamin K-dependent plasma protein that participates in the intrinsic pathway of blood coagulation by converting factor X to its active form in the presence of Ca(2+) ions, phospholipids, and factor VIIIa. The protein is Coagulation factor IX (F9) of Cavia porcellus (Guinea pig).